The primary structure comprises 438 residues: Polycomb protein eed-A (438 aa).

Residues Met-1–Lys-67 form a disordered region. A compositionally biased stretch (polar residues) spans Ser-40–Ala-57. 7 WD repeats span residues Asp-88–Leu-131, Asp-139–His-182, Gly-185–Ile-225, Gly-231–Ala-270, Ile-301–Asp-338, Ser-356–Ala-396, and Lys-405–Arg-438.

The protein belongs to the WD repeat ESC family. As to quaternary structure, component of the prc2/eed-ezh2 complex. Interacts with yy1. Can interact with ezh2, hdac1 and taf9.

It is found in the nucleus. In terms of biological role, polycomb group (PcG) protein. Component of the prc2/eed-ezh2 complex, which methylates 'Lys-9' and 'Lys-27' of histone H3, leading to transcriptional repression of the affected target gene. The protein is Polycomb protein eed-A (eed-a) of Xenopus laevis (African clawed frog).